A 367-amino-acid polypeptide reads, in one-letter code: Glutamate 5-kinase (367 aa).

Residue Lys-10 participates in ATP binding. 3 residues coordinate substrate: Ser-50, Asp-137, and Asn-149. ATP is bound by residues 169–170 (TD) and 211–217 (TGGMSTK). The PUA domain occupies 275–353 (AGEITVDEGA…QQIDAILGYE (79 aa)).

Belongs to the glutamate 5-kinase family.

It is found in the cytoplasm. It carries out the reaction L-glutamate + ATP = L-glutamyl 5-phosphate + ADP. It participates in amino-acid biosynthesis; L-proline biosynthesis; L-glutamate 5-semialdehyde from L-glutamate: step 1/2. Catalyzes the transfer of a phosphate group to glutamate to form L-glutamate 5-phosphate. In Salmonella agona (strain SL483), this protein is Glutamate 5-kinase.